Reading from the N-terminus, the 421-residue chain is Proton/sodium-glutamate symport protein (421 aa).

Over 1-3 (MRK) the chain is Cytoplasmic. Residues 4–24 (IGLAWQIFIGLILGIIVGAIF) form a helical membrane-spanning segment. The Extracellular portion of the chain corresponds to 25-43 (YGNPKVAAYLQPIGDIFLR). Residues 44 to 64 (LIKMIVIPIVISSLVVGVASV) form a helical membrane-spanning segment. Residues 65–77 (GDLKKLGKLGGKT) lie on the Cytoplasmic side of the membrane. Residues 78–98 (IIYFEIITTIAIVVGLLAANI) form a helical membrane-spanning segment. The Extracellular segment spans residues 99 to 148 (FQPGAGVNMKSLEKTDIQSYVDTTNEVQHHSMVETFVNIVPKNIFESLST). Residues 149-169 (GDMLPIIFFSVMFGLGVAAIG) traverse the membrane as a helical segment. Residues 170–198 (EKGKPVLQFFQGTAEAMFYVTNQIMKFAP) lie on the Cytoplasmic side of the membrane. Residues 199 to 219 (FGVFALIGVTVSKFGVESLIP) form a helical membrane-spanning segment. At 220-222 (LSK) the chain is on the extracellular side. The chain crosses the membrane as a helical span at residues 223-243 (LVIVVYATMLFFIFAVLGGVA). A topological domain (cytoplasmic) is located at residue Lys-244. A helical membrane pass occupies residues 245–265 (LFGINIFHIIKILKDELILAY). The Extracellular portion of the chain corresponds to 266-306 (STASSETVLPRIMDKMEKFGCPKAITSFVIPTGYSFNLDGS). Residues 307-327 (TLYQALAAIFIAQLYGIDMSV) form a helical membrane-spanning segment. The Cytoplasmic segment spans residues 328–330 (SQQ). Helical transmembrane passes span 331–351 (ISLLLVLMVTSKGIAGVPGVS) and 352–372 (FVVLLATLGTVGIPVEGLAFI). The Cytoplasmic portion of the chain corresponds to 373-421 (AGIDRILDMARTAVNVIGNSLAAIIMSKWEGQYNEEKGKQYLAELQQSA).

It belongs to the dicarboxylate/amino acid:cation symporter (DAACS) (TC 2.A.23) family. In terms of assembly, homotrimer.

The protein localises to the cell membrane. Its function is as follows. This carrier protein is part of the Na(+)-dependent, binding-protein-independent glutamate-aspartate transport system. The chain is Proton/sodium-glutamate symport protein (gltT) from Bacillus caldotenax.